Reading from the N-terminus, the 116-residue chain is Iron-sulfur cluster insertion protein ErpA (116 aa).

Residues Cys-44, Cys-108, and Cys-110 each contribute to the iron-sulfur cluster site.

This sequence belongs to the HesB/IscA family. Homodimer. Iron-sulfur cluster serves as cofactor.

Its function is as follows. Required for insertion of 4Fe-4S clusters for at least IspG. The polypeptide is Iron-sulfur cluster insertion protein ErpA (Shewanella baltica (strain OS223)).